Here is a 98-residue protein sequence, read N- to C-terminus: NADH-ubiquinone oxidoreductase chain 4L (98 aa).

3 helical membrane passes run methionine 1–methionine 21, serine 29–leucine 49, and methionine 61–valine 81.

This sequence belongs to the complex I subunit 4L family. As to quaternary structure, core subunit of respiratory chain NADH dehydrogenase (Complex I) which is composed of 45 different subunits.

It is found in the mitochondrion inner membrane. The catalysed reaction is a ubiquinone + NADH + 5 H(+)(in) = a ubiquinol + NAD(+) + 4 H(+)(out). In terms of biological role, core subunit of the mitochondrial membrane respiratory chain NADH dehydrogenase (Complex I) which catalyzes electron transfer from NADH through the respiratory chain, using ubiquinone as an electron acceptor. Part of the enzyme membrane arm which is embedded in the lipid bilayer and involved in proton translocation. This chain is NADH-ubiquinone oxidoreductase chain 4L (MT-ND4L), found in Dugong dugon (Dugong).